The chain runs to 280 residues: Small ribosomal subunit protein uS3 (280 aa).

The KH type-2 domain maps to 38–106 (IRKLLATGLE…QVQLNILEVK (69 aa)). The segment at 216–280 (AAAPAADRPR…SAGQPETTES (65 aa)) is disordered. A compositionally biased stretch (low complexity) spans 237–270 (SGASGTTATSTDAGRAASEGTVEAPATEAAATAP).

The protein belongs to the universal ribosomal protein uS3 family. As to quaternary structure, part of the 30S ribosomal subunit. Forms a tight complex with proteins S10 and S14.

Its function is as follows. Binds the lower part of the 30S subunit head. Binds mRNA in the 70S ribosome, positioning it for translation. This Mycolicibacterium vanbaalenii (strain DSM 7251 / JCM 13017 / BCRC 16820 / KCTC 9966 / NRRL B-24157 / PYR-1) (Mycobacterium vanbaalenii) protein is Small ribosomal subunit protein uS3.